The chain runs to 361 residues: FK506-binding protein 39 kDa (361 aa).

Residues 122 to 256 are disordered; sequence LVDEEDEEEE…PSSPKTRTLK (135 aa). Positions 123-174 are enriched in acidic residues; that stretch reads VDEEDEEEEESDEDYDLSPTEEDLVETVSGDEESEEESESEDNSASEEDELD. S192 is modified (phosphoserine). Positions 208 to 227 are enriched in basic and acidic residues; that stretch reads QKVEGTPVKEKKVAFAEKLE. T213 carries the post-translational modification Phosphothreonine. Residues 241–252 are compositionally biased toward polar residues; it reads QASSNAPSSPKT. A Phosphoserine modification is found at S249. Positions 275–361 constitute a PPIase FKBP-type domain; the sequence is GKKVEMRYIG…VFEVKLVRVH (87 aa).

Belongs to the FKBP-type PPIase family. FKBP3/4 subfamily.

Its subcellular location is the nucleus. It is found in the nucleolus. The enzyme catalyses [protein]-peptidylproline (omega=180) = [protein]-peptidylproline (omega=0). PPIase that acts as a histone chaperone. Histone proline isomerase that increases the rate of cis-trans isomerization at prolines on the histone H3 N-terminal tail. Proline isomerization influences H3 methylation thereby regulating gene expression. In Schizosaccharomyces pombe (strain 972 / ATCC 24843) (Fission yeast), this protein is FK506-binding protein 39 kDa.